We begin with the raw amino-acid sequence, 375 residues long: Geranylgeranyl transferase type-1 subunit beta (375 aa).

Residues methionine 1–alanine 33 form a disordered region. Serine 2 is subject to N-acetylserine. PFTB repeat units lie at residues serine 157–aspartate 199, lysine 206–glycine 247, proline 265–glycine 306, and lysine 313–glutamate 354. Residues histidine 232–glycine 234 and arginine 285–lysine 288 contribute to the geranylgeranyl diphosphate site. Zn(2+)-binding residues include aspartate 291 and cysteine 293. Tyrosine 294–tryptophan 297 is a binding site for geranylgeranyl diphosphate. Zn(2+) is bound at residue histidine 342.

Belongs to the protein prenyltransferase subunit beta family. As to quaternary structure, heterodimer of an alpha and a beta subunit. Zn(2+) serves as cofactor. Requires Mg(2+) as cofactor. Expressed in roots, leaves, stems, flowers and siliques.

It carries out the reaction geranylgeranyl diphosphate + L-cysteinyl-[protein] = S-geranylgeranyl-L-cysteinyl-[protein] + diphosphate. Catalyzes the transfer of a geranyl-geranyl moiety from geranyl-geranyl pyrophosphate to a cysteine at the fourth position from the C-terminus of proteins having the C-terminal sequence Cys-aliphatic-aliphatic-X (CaaX). Seems to exclusively prenylate CaaX substrates with leucine in the terminal position. The beta subunit is responsible for peptide-binding. May negatively regulate abscisic acid (ABA) signaling in guard cells and auxin-induced lateral root initiation. In terms of biological role, negatively regulates ABA signaling in guard cells. in negative regulation of auxin-induced lateral root initiation. This is Geranylgeranyl transferase type-1 subunit beta (GGB) from Arabidopsis thaliana (Mouse-ear cress).